The sequence spans 120 residues: Small ribosomal subunit protein uS13 (120 aa).

The interval 93–120 (GLPVRGQNTKNNARTRKGPRRTVANKKK) is disordered. Residues 105 to 120 (ARTRKGPRRTVANKKK) are compositionally biased toward basic residues.

Belongs to the universal ribosomal protein uS13 family. Part of the 30S ribosomal subunit. Has been shown to cross-link to S19 forming a loose heterodimer. Forms two bridges to the 50S subunit in the 70S ribosome.

In terms of biological role, located at the top of the head of the 30S subunit, it contacts several helices of the 16S rRNA. In the 70S ribosome it contacts the 23S rRNA (bridge B1a) and protein L5 of the 50S subunit (bridge B1b), connecting the 2 subunits; these bridges are implicated in subunit movement. Contacts the tRNA in the A and P-sites. The protein is Small ribosomal subunit protein uS13 (rpsM) of Geobacillus stearothermophilus (Bacillus stearothermophilus).